Consider the following 193-residue polypeptide: Imidazoleglycerol-phosphate dehydratase (193 aa).

Belongs to the imidazoleglycerol-phosphate dehydratase family.

It is found in the cytoplasm. The enzyme catalyses D-erythro-1-(imidazol-4-yl)glycerol 3-phosphate = 3-(imidazol-4-yl)-2-oxopropyl phosphate + H2O. It participates in amino-acid biosynthesis; L-histidine biosynthesis; L-histidine from 5-phospho-alpha-D-ribose 1-diphosphate: step 6/9. The sequence is that of Imidazoleglycerol-phosphate dehydratase (hisB) from Saccharolobus solfataricus (strain ATCC 35092 / DSM 1617 / JCM 11322 / P2) (Sulfolobus solfataricus).